Reading from the N-terminus, the 659-residue chain is Putative pentatricopeptide repeat-containing protein At3g16890, mitochondrial (659 aa).

The transit peptide at 1 to 32 (MRGFASSASRIATAAAASKSLNASTSVNPKLS) directs the protein to the mitochondrion. PPR repeat units lie at residues 109 to 143 (DQSL…GYRI), 144 to 178 (SDEL…GMKP), 179 to 213 (STRL…GCKP), 214 to 248 (DRFT…GNRP), 249 to 283 (NVFT…KLNP), 284 to 318 (NEAT…DSNL), 319 to 353 (QRVG…GYIP), 354 to 388 (DSST…GVKP), 389 to 423 (GFNG…GLLS), 424 to 458 (SVYS…GISP), 459 to 493 (NLVT…GFKP), 494 to 528 (DVIT…GIEP), 529 to 563 (NEIT…GLSP), 564 to 598 (DLYA…GLKP), and 599 to 633 (DNFT…GCVP).

The protein belongs to the PPR family. P subfamily.

It localises to the mitochondrion. Required for the ubiquinol-cytochrome c oxidoreductase activity of mitochondrial complex III. The protein is Putative pentatricopeptide repeat-containing protein At3g16890, mitochondrial (PPR40) of Arabidopsis thaliana (Mouse-ear cress).